Reading from the N-terminus, the 156-residue chain is CD-NTase/cGAS isopeptidase (156 aa).

Residues 9–147 (IDDFDNHVVI…WIGKKIKNDI (139 aa)) enclose the MPN domain. Glu-38 serves as the catalytic Proton donor/acceptor. The Zn(2+) site is built by His-100, His-102, and Asp-113. The JAMM motif motif lies at 100-113 (HTHPEDFPHPSFID).

The protein belongs to the peptidase M67B family. Cap3 isopeptidase subfamily.

In terms of biological role, metalloprotease priming reversal component of a CBASS antivirus system. CBASS (cyclic oligonucleotide-based antiphage signaling system) provides immunity against bacteriophages. The CD-NTase protein (DncV) synthesizes cyclic nucleotides in response to infection; these serve as specific second messenger signals. The signals activate a diverse range of effectors, leading to bacterial cell death and thus abortive phage infection. A type II-A(GA) CBASS system. Functionally, reverses the primed state of DncV, the CD-NTase, cleaving it from cellular proteins. Cleaves a Sumo-DncV-DncV fusion protein precisely between the 2 DncV moieties. Protects E.coli against phage infection. When capV and dncV are introduced in E.coli MG1655 there is 1000-fold protection against phage P1; protection against other phage (T4, T5 and T6) requires the 2 subsequent genes. In another paper the capV-dncV-cap2-cap3 operon gives 10(4)-10(5)-fold protection against phages lambda, T2, T4 and T6, about 1000-fold protection against P1 and 10-fold protection against T5. This is CD-NTase/cGAS isopeptidase from Escherichia coli (strain TW11681).